A 250-amino-acid chain; its full sequence is UPF0014 membrane protein YjkA (250 aa).

Transmembrane regions (helical) follow at residues 3–23, 32–52, 57–77, 91–111, 117–137, and 214–234; these read YLSL…SKSF, IIAT…LSLI, HPVF…QNVI, FAAL…LHII, YVIP…SLFL, and LLIV…LSVL.

It belongs to the UPF0014 family.

Its subcellular location is the cell membrane. In Bacillus subtilis (strain 168), this protein is UPF0014 membrane protein YjkA (yjkA).